The primary structure comprises 467 residues: MAAAAAARAVPVSSGFRGLRRTLPLVVILGATGTGKSTLALQLGQRLGGEIVSADSMQVYEGLDIITNKVSAQEQKMCQHHMISFVDPLVTSYTVVDFRNKATALIEDIFARDKIPIVVGGTNYYIESLLWKVLITTKPQEMGTGKVVDRKVELEKEDGHELHKRLSQVDPEMAAKLHPHDKRKVARSLQVFEETGISHSEFLHRQHAEEGGGPLGGPLRFPNPCILWLHADQAVLDERLDKRVDDMLAAGLLEELRGFHRRYNLKNISENSQDYQHGIFQSIGFKEFHEYLTTEGKCTPETSNQLLKKGIEALKQVTKRYARKQNRWVKNRFLSRPGPSVPPVYGLEVSDVSKWEESVLEPALNIVQSFIQGHKPTAMPVKMAYNESENKRSYHMCDLCDRIIIGDREWAAHLKSKSHLHQLKKRRRLDLDAVSATGSQSNSPDCDPERIEGESSGQHNQELKASV.

A mitochondrion-targeting transit peptide spans 1–47 (MAAAAAARAVPVSSGFRGLRRTLPLVVILGATGTGKSTLALQLGQRL). Position 32-37 (32-37 (TGTGKS)) interacts with dimethylallyl diphosphate. Interaction with substrate tRNA regions lie at residues 55–58 (DSMQ) and 183–187 (RKVAR). Positions 221–230 (FPNPCILWLH) are core aggregation region. Residues 233–255 (QAVLDERLDKRVDDMLAAGLLEE) form an interaction with isopentenylpyrophosphate transferase region. Interaction with substrate tRNA regions lie at residues 281–283 (QSI) and 313–331 (ALKQ…WVKN). The Matrin-type zinc finger occupies 395–425 (HMCDLCDRIIIGDREWAAHLKSKSHLHQLKK). The tract at residues 432 to 467 (DAVSATGSQSNSPDCDPERIEGESSGQHNQELKASV) is disordered. Phosphoserine is present on residues Ser443 and Ser455.

The protein belongs to the IPP transferase family.

It is found in the mitochondrion. The protein localises to the cytoplasm. It localises to the nucleus. It carries out the reaction adenosine(37) in tRNA + dimethylallyl diphosphate = N(6)-dimethylallyladenosine(37) in tRNA + diphosphate. In terms of biological role, catalyzes the transfer of a dimethylallyl group onto the adenine at position 37 of both cytosolic and mitochondrial tRNAs, leading to the formation of N6-(dimethylallyl)adenosine (i6A37). Mediates modification of a limited subset of tRNAs: tRNA(Ser)(AGA), tRNA(Ser)(CGA), tRNA(Ser)(UGA), as well as partial modification of the selenocysteine tRNA(Ser)(UCA). TRIT1 is therefore required for selenoprotein expression. In Mus musculus (Mouse), this protein is tRNA dimethylallyltransferase (Trit1).